The primary structure comprises 302 residues: uncharacterized protein (302 aa).

The next 9 helical transmembrane spans lie at 10–30 (VLSV…GVLG), 65–85 (LVLI…IAYL), 102–122 (VAAA…GIFG), 130–150 (IFYD…LSHI), 162–182 (AVFF…LWGL), 190–210 (ILGY…GLTL), 224–244 (LVSG…SYVL), 251–271 (FSVT…VLAI), and 282–302 (SCIF…SVVL).

Belongs to the auxin efflux carrier (TC 2.A.69) family.

The protein localises to the cell membrane. This is an uncharacterized protein from Methanothermobacter thermautotrophicus (strain ATCC 29096 / DSM 1053 / JCM 10044 / NBRC 100330 / Delta H) (Methanobacterium thermoautotrophicum).